We begin with the raw amino-acid sequence, 291 residues long: Beta-lactamase CTX-M-6 (291 aa).

Positions Met1–Ala28 are cleaved as a signal peptide. Ser73 serves as the catalytic Acyl-ester intermediate. A substrate-binding site is contributed by Lys237–Gly239.

Belongs to the class-A beta-lactamase family.

It catalyses the reaction a beta-lactam + H2O = a substituted beta-amino acid. Has cefotaxime-hydrolyzing activity. In Salmonella typhimurium, this protein is Beta-lactamase CTX-M-6 (bla).